The following is a 1040-amino-acid chain: Multidrug resistance protein MdtB (1040 aa).

The next 12 membrane-spanning stretches (helical) occupy residues 25-45, 347-367, 369-389, 396-416, 440-460, 472-492, 537-557, 869-889, 890-910, 911-931, 968-988, and 998-1018; these read LLMA…PVAA, LMLA…NIPA, IIPG…MVFL, LTLM…IVVI, IGFT…PLLF, FAVT…TLTP, WLTL…WIVI, LIVA…ESFI, HPIT…LALM, IAGS…IGIV, ILMT…STGV, and IAMV…TPVI.

The protein belongs to the resistance-nodulation-cell division (RND) (TC 2.A.6) family. MdtB subfamily. Part of a tripartite efflux system composed of MdtA, MdtB and MdtC. MdtB forms a heteromultimer with MdtC.

It is found in the cell inner membrane. The chain is Multidrug resistance protein MdtB from Salmonella arizonae (strain ATCC BAA-731 / CDC346-86 / RSK2980).